Consider the following 160-residue polypeptide: Transcription antitermination protein NusB (160 aa).

This sequence belongs to the NusB family.

Its function is as follows. Involved in transcription antitermination. Required for transcription of ribosomal RNA (rRNA) genes. Binds specifically to the boxA antiterminator sequence of the ribosomal RNA (rrn) operons. The chain is Transcription antitermination protein NusB from Chlamydia pneumoniae (Chlamydophila pneumoniae).